Reading from the N-terminus, the 526-residue chain is MTRYCRGLSQRQAFLLLTVLALLFILLFVVKDPRAKDSRCQFIWKNDASAQENQQKAEPQVPIMTLSPRVHNKETTSVSSKDLKKQEREAVQGEQAEGKEKRKLETIRPAPENPQSKAEPAAKTPVSEHLDKLPRAPGALSTRKTPMATGAVPAKKKVVQATKSPASSPHPTTRRRQRLKASEFKSEPRWDFEEEYSLDMSSLQTNCSASVKIKASKSPWLQNIFLPNITLFLDSGRFTQSEWNRLEHFAPPFGFMELNQSLVQKVVTRFPPVRQQQLLLASLPTGYSKCITCAVVGNGGILNDSRVGREIDSHDYVFRLSGAVIKGYEQDVGTRTSFYGFTAFSLTQSILILGRRGFQHVPLGKDVRYLHFLEGTRDYEWLEAMFLNQTLAKTHLSWFRHRPQEAFRNALDLDRYLLLHPDFLRYMKNRFLRSKTLDTAHWRIYRPTTGALLLLTALHLCDKVSAYGFITEGHQRFSDHYYDTSWKRLIFYINHDFRLERMVWKRLHDEGIIWLYQRPQSDKAKN.

Residues 1–12 (MTRYCRGLSQRQ) lie on the Cytoplasmic side of the membrane. The chain crosses the membrane as a helical; Signal-anchor for type II membrane protein span at residues 13–33 (AFLLLTVLALLFILLFVVKDP). The Lumenal segment spans residues 34–526 (RAKDSRCQFI…QRPQSDKAKN (493 aa)). The interval 49–182 (SAQENQQKAE…TRRRQRLKAS (134 aa)) is disordered. Over residues 81-106 (KDLKKQEREAVQGEQAEGKEKRKLET) the composition is skewed to basic and acidic residues. Polar residues predominate over residues 161 to 171 (ATKSPASSPHP). N-linked (GlcNAc...) asparagine glycosylation is found at Asn-206, Asn-228, Asn-259, Asn-303, and Asn-388. Cystine bridges form between Cys-207–Cys-290 and Cys-293–Cys-461.

The protein belongs to the glycosyltransferase 29 family. In terms of processing, glycosylated; autosialylated. Submaxillary gland, mammary gland, spleen and colon.

It localises to the golgi apparatus membrane. It carries out the reaction a beta-D-galactosyl-(1-&gt;3)-N-acetyl-alpha-D-galactosaminyl derivative + CMP-N-acetyl-beta-neuraminate = a beta-D-galactosyl-(1-&gt;3)-[N-acetyl-alpha-neuraminyl-(2-&gt;6)]-N-acetyl-alpha-D-galactosaminyl derivative + CMP + H(+). It catalyses the reaction a 3-O-[N-acetyl-alpha-D-galactosaminyl]-L-seryl-[protein] + CMP-N-acetyl-beta-neuraminate = a 3-O-[N-acetyl-alpha-neuraminosyl-(2-&gt;6)-N-acetyl-alpha-D-galactosaminyl]-L-seryl-[protein] + CMP + H(+). The catalysed reaction is a 3-O-[N-acetyl-alpha-D-galactosaminyl]-L-threonyl-[protein] + CMP-N-acetyl-beta-neuraminate = a 3-O-[N-acetyl-alpha-neuraminosyl-(2-&gt;6)-N-acetyl-alpha-D-galactosaminyl]-L-threonyl-[protein] + CMP + H(+). The enzyme catalyses a 3-O-[beta-D-galactosyl-(1-&gt;3)-N-acetyl-alpha-D-galactosaminyl]-L-seryl-[protein] + CMP-N-acetyl-beta-neuraminate = a 3-O-{beta-D-galactosyl-(1-&gt;3)-[N-acetyl-alpha-neuraminosyl-(2-&gt;6)]-N-acetyl-alpha-D-galactosaminyl}-L-seryl-[protein] + CMP + H(+). It carries out the reaction a 3-O-[beta-D-galactosyl-(1-&gt;3)-N-acetyl-alpha-D-galactosaminyl]-L-threonyl-[protein] + CMP-N-acetyl-beta-neuraminate = a 3-O-{beta-D-galactosyl-(1-&gt;3)-[N-acetyl-alpha-neuraminosyl-(2-&gt;6)]-N-acetyl-alpha-D-galactosaminyl}-L-threonyl-[protein] + CMP + H(+). It catalyses the reaction a 3-O-[N-acetyl-alpha-neuraminyl-(2-&gt;3)-beta-D-galactosyl-(1-&gt;3)-N-acetyl-alpha-D-galactosaminyl]-L-threonyl-[protein] + CMP-N-acetyl-beta-neuraminate = a 3-O-{alpha-Neu5Ac-(2-&gt;3)-beta-D-Gal-(1-&gt;3)-[alpha-Neu5Ac-(2-&gt;6)]-alpha-D-GalNAc}-L-threonyl-[protein] + CMP + H(+). It functions in the pathway protein modification; protein glycosylation. Functionally, protein sialyltransferase specifically expressed in goblet cells that plays a key role in intestinal host-commensal homeostasis. Conjugates sialic acid with an alpha-2-6 linkage to N-acetylgalactosamine (GalNAc) glycan chains linked to serine or threonine in glycoproteins. Catalyzes the formation of the sialyl-Tn (S-Tn) antigen, an antigen found in intestinal goblet cells. Protein sialylation in globlet cells is essential for mucus integrity and is required to protect the intestinal mucus against excessive bacterial proteolytic degradation. The sequence is that of Alpha-N-acetylgalactosaminide alpha-2,6-sialyltransferase 1 from Mus musculus (Mouse).